The chain runs to 508 residues: MEEFKGYLQKGGLKQQHFLYPLLFKEYIYALAYDQGLNASTFNEPDDISGYDKKYSSLLVKRLIKRLYQQNSLIRSVNKDKQTRFVGHNKNFYYQMVSEGFAIVLEIPLSLRLVSSLKEKKDIPKYQNLRSIHSIFSFLEDKFPHLHYISDILLPYPVHLEKLIQILQCWIHDGPTLHLLRLFFHDYHNWSNCITTKKSSYGFSKENPSLYRFLYNSYVVEAESIFVFLRKSSSYLRSTSFGPLLERTHFYGKMKHIGVTRCNDFQKPLGLFKDPMMHYVRYQSKVLIASRGTYLLLKKWKSYFMNLWQCHFDFWSEPSRIHINQFPKFSFYFLGYLSSIEMTPSSIKSQMLENYFLIDTVTPKFQTIIAISPIIGSLARARFCNLSGNPISKPVWTDLSDSEIIDRFGRLCRNLSHYYSGSSKKQSLYRIKYILRLSCARTLARKHKTTVRTFLQKLGSEFFEEFFMEEEKVLSLMLSRTSNPLHQLYREPIWFLDIIRLNDLVNHL.

Belongs to the intron maturase 2 family. MatK subfamily.

Its subcellular location is the plastid. The protein localises to the chloroplast. Functionally, usually encoded in the trnK tRNA gene intron. Probably assists in splicing its own and other chloroplast group II introns. In Wolffia arrhiza (Rootless water-meal), this protein is Maturase K.